The primary structure comprises 142 residues: ATP synthase epsilon chain (142 aa).

The protein belongs to the ATPase epsilon chain family. In terms of assembly, F-type ATPases have 2 components, CF(1) - the catalytic core - and CF(0) - the membrane proton channel. CF(1) has five subunits: alpha(3), beta(3), gamma(1), delta(1), epsilon(1). CF(0) has three main subunits: a, b and c.

Its subcellular location is the cell inner membrane. Functionally, produces ATP from ADP in the presence of a proton gradient across the membrane. In Shewanella putrefaciens (strain CN-32 / ATCC BAA-453), this protein is ATP synthase epsilon chain.